The following is a 47-amino-acid chain: Turripeptide Ici9.1 (47 aa).

Disulfide bonds link Cys-1/Cys-31, Cys-5/Cys-24, and Cys-13/Cys-45. Residues 1 to 47 (CLSVCSMEYWPVCGSDGKTYPNECHLTSEACMSNTDITVAHVGKCDQ) form the Kazal-like domain.

Belongs to the conopeptide P-like superfamily. As to expression, expressed by the venom duct.

It localises to the secreted. In terms of biological role, acts as a neurotoxin by inhibiting an ion channel. May also act as a serine protease inhibitor, since it possess the kazal serine protease inhibitor signature. In Iotyrris cingulifera (Sea snail), this protein is Turripeptide Ici9.1.